The primary structure comprises 905 residues: Coatomer subunit beta' (905 aa).

WD repeat units lie at residues 13–52 (AMSD…LVKT), 55–94 (VCDL…RVHM), 97–136 (AHSD…SCSQ), 140–180 (GHTH…PNFT), 183–224 (GHEK…CVQT), 227–266 (GHAQ…LEST), 350–388 (SCEI…NKSF), and 390–425 (SAQE…KSFK). N6-acetyllysine is present on Lys-627. A WD 9 repeat occupies 746–783 (IRTGRLPEAAFLARTYLPSQVSRVVKLWRENLSKVNQK). The interval 837–905 (EEAKRFQPSR…INLDEDILDD (69 aa)) is disordered. Phosphoserine is present on Ser-859. Residues 867–891 (QTTHKEEKSFQELEDDLDTMELEDI) are a coiled coil. Residues 878-905 (ELEDDLDTMELEDIDTTDINLDEDILDD) show a composition bias toward acidic residues.

This sequence belongs to the WD repeat COPB2 family. In terms of assembly, oligomeric complex that consists of at least the alpha, beta, beta', gamma, delta, epsilon and zeta subunits. Probably interacts with PEX11A. Interacts with JAGN1. Interacts with SCYL1.

The protein localises to the cytoplasm. It is found in the cytosol. It localises to the golgi apparatus membrane. Its subcellular location is the cytoplasmic vesicle. The protein resides in the COPI-coated vesicle membrane. In terms of biological role, the coatomer is a cytosolic protein complex that binds to dilysine motifs and reversibly associates with Golgi non-clathrin-coated vesicles, which further mediate biosynthetic protein transport from the ER, via the Golgi up to the trans Golgi network. Coatomer complex is required for budding from Golgi membranes, and is essential for the retrograde Golgi-to-ER transport of dilysine-tagged proteins. In mammals, the coatomer can only be recruited by membranes associated to ADP-ribosylation factors (ARFs), which are small GTP-binding proteins; the complex also influences the Golgi structural integrity, as well as the processing, activity, and endocytic recycling of LDL receptors. This coatomer complex protein, essential for Golgi budding and vesicular trafficking, is a selective binding protein (RACK) for protein kinase C, epsilon type. It binds to Golgi membranes in a GTP-dependent manner. The chain is Coatomer subunit beta' (Copb2) from Rattus norvegicus (Rat).